The chain runs to 348 residues: Ninja-family protein AFP2 (348 aa).

The tract at residues 186 to 272 is disordered; the sequence is DSDGGGATGG…VDRKGKGMAT (87 aa). Residues 187-197 are compositionally biased toward gly residues; that stretch reads SDGGGATGGGS. Composition is skewed to polar residues over residues 207-216 and 228-244; these read KNQQGSSNSC and CSSN…SVTR. The span at 247 to 267 shows a compositional bias: basic and acidic residues; that stretch reads KVNENENEKRVRSEDSVDRKG.

The protein belongs to the Ninja family. In terms of assembly, forms a homodimer and heterodimer with AFP1 and AFP3. Interacts with ABI5/DPBF1, DPBF2, AREB3/DPBF3, EEL/DPBF4, ABF1, ABF3/DPBF5 and ABF4/AREB2.

It localises to the nucleus. Functionally, acts as a negative regulator of abscisic acid (ABA) response during germination through the ubiquitin-mediated proteolysis of ABI5/DPBF1. The chain is Ninja-family protein AFP2 (AFP2) from Arabidopsis thaliana (Mouse-ear cress).